A 101-amino-acid chain; its full sequence is Small ribosomal subunit protein uS14 (101 aa).

This sequence belongs to the universal ribosomal protein uS14 family. In terms of assembly, part of the 30S ribosomal subunit. Contacts proteins S3 and S10.

Its function is as follows. Binds 16S rRNA, required for the assembly of 30S particles and may also be responsible for determining the conformation of the 16S rRNA at the A site. This is Small ribosomal subunit protein uS14 from Rhizobium etli (strain CIAT 652).